The following is a 604-amino-acid chain: Netrin-1 (604 aa).

The N-terminal stretch at 1 to 24 (MMRAVWEALAALAAVACLVGAVRG) is a signal peptide. Residues 47–284 (HPRRCIPDFV…AVSDLQVGGR (238 aa)) enclose the Laminin N-terminal domain. N-linked (GlcNAc...) asparagine glycans are attached at residues N95, N116, and N131. Cystine bridges form between C119/C152, C285/C294, C287/C304, C306/C315, C318/C338, C341/C350, C343/C368, C371/C380, C383/C401, C404/C416, C406/C423, C425/C434, C437/C451, C472/X544, and C491/C601. 3 consecutive Laminin EGF-like domains span residues 285 to 340 (CKCN…ECVA), 341 to 403 (CNCN…ACKA), and 404 to 453 (CDCH…PCIK). N417 carries N-linked (GlcNAc...) asparagine glycosylation. An NTR domain is found at 472–601 (CDSYCKASKG…FQQREKKGKC (130 aa)). The Cell attachment site motif lies at 530–532 (RGD).

Binds to its receptors; DCC, UNC5A, UNC5B, UNC5C and probably UNC5D. Binds to its receptor; DSCAM. Interacts with APP.

It is found in the secreted. Its subcellular location is the cytoplasm. Its function is as follows. Netrins control guidance of CNS commissural axons and peripheral motor axons. Its association with either DCC or some UNC5 receptors will lead to axon attraction or repulsion, respectively. Binding to UNC5C might cause dissociation of UNC5C from polymerized TUBB3 in microtubules and thereby lead to increased microtubule dynamics and axon repulsion. Involved in dorsal root ganglion axon projection towards the spinal cord. It also serves as a survival factor via its association with its receptors which prevent the initiation of apoptosis. Involved in colorectal tumorigenesis by regulating apoptosis. This Rattus norvegicus (Rat) protein is Netrin-1 (Ntn1).